Reading from the N-terminus, the 1647-residue chain is Probable ubiquitin fusion degradation protein C12B10.01c (1647 aa).

Residues 192-209 (TYSDSSNYHTSTDSSQYN) show a composition bias toward polar residues. Disordered stretches follow at residues 192–288 (TYSD…PSAA) and 1039–1076 (ESMSGSSRNSSGDYTDSMSQDAPNHTTEPSERRDSSTS). Composition is skewed to acidic residues over residues 218–228 (DTNDGTDDDIN) and 245–273 (ERDEDVDEEEEEDDDENNDEGDDEDENEN). Residues 1039–1050 (ESMSGSSRNSSG) show a composition bias toward low complexity. Residues 1051-1065 (DYTDSMSQDAPNHTT) show a composition bias toward polar residues. Residues 1066 to 1076 (EPSERRDSSTS) are compositionally biased toward basic and acidic residues. Residues 1183–1257 (IENILTDFSN…SVSFLLSRNP (75 aa)) are K-box. One can recognise an HECT domain in the interval 1294-1647 (ATYAASENIL…LEGQGSFHLS (354 aa)). Cys-1614 serves as the catalytic Glycyl thioester intermediate.

The protein belongs to the UPL family. K-HECT subfamily.

The enzyme catalyses S-ubiquitinyl-[E2 ubiquitin-conjugating enzyme]-L-cysteine + [acceptor protein]-L-lysine = [E2 ubiquitin-conjugating enzyme]-L-cysteine + N(6)-ubiquitinyl-[acceptor protein]-L-lysine.. Its function is as follows. E3 ubiquitin-protein ligase which accepts ubiquitin from an E2 ubiquitin-conjugating enzyme in the form of a thioester and then directly transfers the ubiquitin to targeted substrates. This Schizosaccharomyces pombe (strain 972 / ATCC 24843) (Fission yeast) protein is Probable ubiquitin fusion degradation protein C12B10.01c.